The following is a 125-amino-acid chain: Large ribosomal subunit protein bL12 (125 aa).

It belongs to the bacterial ribosomal protein bL12 family. Homodimer. Part of the ribosomal stalk of the 50S ribosomal subunit. Forms a multimeric L10(L12)X complex, where L10 forms an elongated spine to which 2 to 4 L12 dimers bind in a sequential fashion. Binds GTP-bound translation factors.

Functionally, forms part of the ribosomal stalk which helps the ribosome interact with GTP-bound translation factors. Is thus essential for accurate translation. The sequence is that of Large ribosomal subunit protein bL12 from Dictyoglomus thermophilum (strain ATCC 35947 / DSM 3960 / H-6-12).